Consider the following 75-residue polypeptide: Carwaprin-b (75 aa).

Positions 1–24 are cleaved as a signal peptide; it reads MSSGGLLLLLGLLTLWAELTPVSS. The WAP domain maps to 27–72; the sequence is RPKKPGLCPPRPQKPPCVRECKNDWRCPGEQKCCRYGCIYECRDPI. Disulfide bonds link Cys34–Cys60, Cys43–Cys64, Cys47–Cys59, and Cys53–Cys68.

The protein belongs to the venom waprin family. As to expression, expressed by the venom gland.

Its subcellular location is the secreted. In terms of biological role, damages membranes of susceptible bacteria. Has no hemolytic activity. Not toxic to mice. Does not inhibit the proteinases elastase and cathepsin G. The chain is Carwaprin-b from Tropidechis carinatus (Australian rough-scaled snake).